The sequence spans 92 residues: Small ribosomal subunit protein uS19 (92 aa).

It belongs to the universal ribosomal protein uS19 family. Part of the 30S ribosomal subunit.

Protein S19 forms a complex with S13 that binds strongly to the 16S ribosomal RNA. The polypeptide is Small ribosomal subunit protein uS19 (rpsS) (Bacillus subtilis (strain 168)).